We begin with the raw amino-acid sequence, 284 residues long: Pantothenate synthetase (284 aa).

30-37 lines the ATP pocket; the sequence is MGNLHDGH. Histidine 37 acts as the Proton donor in catalysis. A (R)-pantoate-binding site is contributed by glutamine 61. Position 61 (glutamine 61) interacts with beta-alanine. 149 to 152 contacts ATP; that stretch reads GEKD. Glutamine 155 contributes to the (R)-pantoate binding site. Residues isoleucine 178 and 186–189 each bind ATP; that span reads LSSR.

Belongs to the pantothenate synthetase family. In terms of assembly, homodimer.

The protein resides in the cytoplasm. The catalysed reaction is (R)-pantoate + beta-alanine + ATP = (R)-pantothenate + AMP + diphosphate + H(+). It functions in the pathway cofactor biosynthesis; (R)-pantothenate biosynthesis; (R)-pantothenate from (R)-pantoate and beta-alanine: step 1/1. Catalyzes the condensation of pantoate with beta-alanine in an ATP-dependent reaction via a pantoyl-adenylate intermediate. The polypeptide is Pantothenate synthetase (Salmonella typhi).